Reading from the N-terminus, the 193-residue chain is Ribosomal RNA large subunit methyltransferase E (193 aa).

Residues Gly-48, Phe-50, Asp-67, Asn-85, and Asp-107 each contribute to the S-adenosyl-L-methionine site. Lys-147 serves as the catalytic Proton acceptor.

Belongs to the class I-like SAM-binding methyltransferase superfamily. RNA methyltransferase RlmE family.

The protein resides in the cytoplasm. The catalysed reaction is uridine(2552) in 23S rRNA + S-adenosyl-L-methionine = 2'-O-methyluridine(2552) in 23S rRNA + S-adenosyl-L-homocysteine + H(+). In terms of biological role, specifically methylates the uridine in position 2552 of 23S rRNA at the 2'-O position of the ribose in the fully assembled 50S ribosomal subunit. This chain is Ribosomal RNA large subunit methyltransferase E, found in Borrelia duttonii (strain Ly).